Here is a 389-residue protein sequence, read N- to C-terminus: Protein IQ-domain 26 (389 aa).

IQ domains are found at residues 106–134 (ERWA…GLVK) and 135–157 (LQAL…SMQA). The segment at 137 to 151 (ALVRGYLVRKRAAET) is calmodulin-binding. Residues 347 to 374 (SVSGVRMVQPQPQPQTQTQQQKRSPCSY) are disordered.

Belongs to the IQD family. As to quaternary structure, binds to multiple calmodulin (CaM) in the presence of Ca(2+) and CaM-like proteins.

The protein localises to the cell membrane. It is found in the cytoplasm. It localises to the cytoskeleton. Functionally, may be involved in cooperative interactions with calmodulins or calmodulin-like proteins. Recruits calmodulin proteins to microtubules, thus being a potential scaffold in cellular signaling and trafficking. May associate with nucleic acids and regulate gene expression at the transcriptional or post-transcriptional level. The chain is Protein IQ-domain 26 from Arabidopsis thaliana (Mouse-ear cress).